Here is a 214-residue protein sequence, read N- to C-terminus: Probable nicotinate-nucleotide adenylyltransferase (214 aa).

The protein belongs to the NadD family.

It carries out the reaction nicotinate beta-D-ribonucleotide + ATP + H(+) = deamido-NAD(+) + diphosphate. Its pathway is cofactor biosynthesis; NAD(+) biosynthesis; deamido-NAD(+) from nicotinate D-ribonucleotide: step 1/1. Catalyzes the reversible adenylation of nicotinate mononucleotide (NaMN) to nicotinic acid adenine dinucleotide (NaAD). This is Probable nicotinate-nucleotide adenylyltransferase from Aeromonas salmonicida (strain A449).